The sequence spans 1347 residues: Probable serine/threonine-protein kinase DDB_G0288147 (1347 aa).

A Phorbol-ester/DAG-type zinc finger spans residues Asn-12–Cys-67. Disordered stretches follow at residues Pro-262–Ser-316, Ser-333–Lys-402, and Asp-463–Asn-485. Residues Asp-271–Arg-282 are compositionally biased toward polar residues. 3 stretches are compositionally biased toward low complexity: residues Lys-286 to Ser-316, Ser-333 to Leu-342, and Thr-350 to Thr-361. Basic residues-rich tracts occupy residues Asn-366–Lys-382 and Asn-389–Lys-402. Positions Asn-464–Asn-485 are enriched in low complexity. In terms of domain architecture, Protein kinase spans Val-599 to Leu-854. Residues Ile-605–Val-613 and Lys-626 contribute to the ATP site. The Proton acceptor role is filled by Asp-724. Disordered stretches follow at residues Ser-937–Pro-1241 and Ser-1282–Pro-1310. Residues Ile-976–Asp-986 show a composition bias toward acidic residues. Low complexity-rich tracts occupy residues Asn-1004 to Val-1015 and Ser-1024 to Asn-1062. Polar residues-rich tracts occupy residues Leu-1063–Met-1083 and Leu-1118–Gly-1127. 2 stretches are compositionally biased toward low complexity: residues Asp-1128–Pro-1241 and Ser-1282–Asp-1291.

Belongs to the protein kinase superfamily. TKL Ser/Thr protein kinase family.

It carries out the reaction L-seryl-[protein] + ATP = O-phospho-L-seryl-[protein] + ADP + H(+). The enzyme catalyses L-threonyl-[protein] + ATP = O-phospho-L-threonyl-[protein] + ADP + H(+). This Dictyostelium discoideum (Social amoeba) protein is Probable serine/threonine-protein kinase DDB_G0288147.